The sequence spans 257 residues: A-factor type gamma-butyrolactone 1'-reductase (1S-forming) (257 aa).

Y161 acts as the Proton acceptor in catalysis.

This sequence belongs to the short-chain dehydrogenases/reductases (SDR) family. As to quaternary structure, homodimer.

It catalyses the reaction a (3R,4R)-3-[(1S)-1-hydroxyalkyl]-4-(hydroxymethyl)oxolan-2-one + NADP(+) = a (3R,4R)-3-alkanoyl-4-(hydroxymethyl)oxolan-2-one + NADPH + H(+). Functionally, involved in the biosynthesis of virginiae butanolide (VB), which regulates the production of antibiotic virginiamycin. Catalyzes the reduction of 6-dehydro-VB-A to VB-A, the last catalytic step in VB biosynthesis. In vitro, can use various synthetic A-factor-type analogs. The polypeptide is A-factor type gamma-butyrolactone 1'-reductase (1S-forming) (Streptomyces virginiae (Streptomyces cinnamonensis)).